Reading from the N-terminus, the 433-residue chain is 3-phosphoshikimate 1-carboxyvinyltransferase (433 aa).

Residues Lys23, Ser24, and Arg28 each contribute to the 3-phosphoshikimate site. Lys23 lines the phosphoenolpyruvate pocket. 2 residues coordinate phosphoenolpyruvate: Gly95 and Arg123. Residues Ser170, Ser171, Gln172, Ser198, Asp317, and Lys344 each coordinate 3-phosphoshikimate. Gln172 is a phosphoenolpyruvate binding site. Asp317 functions as the Proton acceptor in the catalytic mechanism. 3 residues coordinate phosphoenolpyruvate: Arg348, Arg391, and Lys416.

The protein belongs to the EPSP synthase family. In terms of assembly, monomer.

It is found in the cytoplasm. The enzyme catalyses 3-phosphoshikimate + phosphoenolpyruvate = 5-O-(1-carboxyvinyl)-3-phosphoshikimate + phosphate. It functions in the pathway metabolic intermediate biosynthesis; chorismate biosynthesis; chorismate from D-erythrose 4-phosphate and phosphoenolpyruvate: step 6/7. Functionally, catalyzes the transfer of the enolpyruvyl moiety of phosphoenolpyruvate (PEP) to the 5-hydroxyl of shikimate-3-phosphate (S3P) to produce enolpyruvyl shikimate-3-phosphate and inorganic phosphate. This chain is 3-phosphoshikimate 1-carboxyvinyltransferase, found in Neisseria gonorrhoeae (strain NCCP11945).